A 556-amino-acid polypeptide reads, in one-letter code: 2-succinyl-5-enolpyruvyl-6-hydroxy-3-cyclohexene-1-carboxylate synthase (556 aa).

It belongs to the TPP enzyme family. MenD subfamily. In terms of assembly, homodimer. Mg(2+) is required as a cofactor. Requires Mn(2+) as cofactor. It depends on thiamine diphosphate as a cofactor.

The enzyme catalyses isochorismate + 2-oxoglutarate + H(+) = 5-enolpyruvoyl-6-hydroxy-2-succinyl-cyclohex-3-ene-1-carboxylate + CO2. Its pathway is quinol/quinone metabolism; 1,4-dihydroxy-2-naphthoate biosynthesis; 1,4-dihydroxy-2-naphthoate from chorismate: step 2/7. It functions in the pathway quinol/quinone metabolism; menaquinone biosynthesis. Its function is as follows. Catalyzes the thiamine diphosphate-dependent decarboxylation of 2-oxoglutarate and the subsequent addition of the resulting succinic semialdehyde-thiamine pyrophosphate anion to isochorismate to yield 2-succinyl-5-enolpyruvyl-6-hydroxy-3-cyclohexene-1-carboxylate (SEPHCHC). The polypeptide is 2-succinyl-5-enolpyruvyl-6-hydroxy-3-cyclohexene-1-carboxylate synthase (Shigella boydii serotype 4 (strain Sb227)).